Consider the following 297-residue polypeptide: Probable porphobilinogen deaminase (297 aa).

Position 241 is an S-(dipyrrolylmethanemethyl)cysteine (cysteine 241).

It belongs to the HMBS family. Requires dipyrromethane as cofactor.

It catalyses the reaction 4 porphobilinogen + H2O = hydroxymethylbilane + 4 NH4(+). It functions in the pathway porphyrin-containing compound metabolism; protoporphyrin-IX biosynthesis; coproporphyrinogen-III from 5-aminolevulinate: step 2/4. In terms of biological role, tetrapolymerization of the monopyrrole PBG into the hydroxymethylbilane pre-uroporphyrinogen in several discrete steps. The protein is Probable porphobilinogen deaminase of Pyrobaculum arsenaticum (strain DSM 13514 / JCM 11321 / PZ6).